Consider the following 386-residue polypeptide: 3-ketoacyl-CoA thiolase (386 aa).

The active-site Acyl-thioester intermediate is Cys91. Residues His342 and Cys372 each act as proton acceptor in the active site.

It belongs to the thiolase-like superfamily. Thiolase family. Heterotetramer of two alpha chains (FadB) and two beta chains (FadA).

The protein localises to the cytoplasm. It carries out the reaction an acyl-CoA + acetyl-CoA = a 3-oxoacyl-CoA + CoA. The protein operates within lipid metabolism; fatty acid beta-oxidation. Functionally, catalyzes the final step of fatty acid oxidation in which acetyl-CoA is released and the CoA ester of a fatty acid two carbons shorter is formed. This Pseudoalteromonas atlantica (strain T6c / ATCC BAA-1087) protein is 3-ketoacyl-CoA thiolase.